The primary structure comprises 442 residues: MSEMTPREIVHELDAHIIGQKKAKRSVAVALRNRWRRMQLDADFRQEVTPKNILMIGPTGVGKTEIARRLAKLANAPFIKVEATKFTEVGYVGKEVEQIIRDLTDIAIKLTREQQMGKCRQRAEEHAEERILDALLPKPKNDWDNTDSDTSSNTRQIFRKKLREGQLDDKEIDIDVAQPQVGIEIMSPPGMEEMTNQLQSLFKNMGQAPAKRRKMKIKEAFKLLIEEEAAKLVNQEDLKEQAIELVEQHGIVFLDEIDKICKRGETSGPDVSREGVQRDLLPLVEGCTVTTKHGMVKTDHILFIASGAFQMAKPSDLIPELQGRLPIRVELDALSADDFKRILTEPHASLTEQYIALMATEGVTIEFAESGIESIAKAAWQVNERTENIGARRLHTVMEKLMEDISYEASDKSGSSFVIDADYVSAHLDNLVQDEDLSRFIL.

ATP contacts are provided by residues I18 and 60–65 (GVGKTE). The interval 133 to 156 (DALLPKPKNDWDNTDSDTSSNTRQ) is disordered. Residues D255, E320, and R392 each contribute to the ATP site.

The protein belongs to the ClpX chaperone family. HslU subfamily. In terms of assembly, a double ring-shaped homohexamer of HslV is capped on each side by a ring-shaped HslU homohexamer. The assembly of the HslU/HslV complex is dependent on binding of ATP.

The protein resides in the cytoplasm. In terms of biological role, ATPase subunit of a proteasome-like degradation complex; this subunit has chaperone activity. The binding of ATP and its subsequent hydrolysis by HslU are essential for unfolding of protein substrates subsequently hydrolyzed by HslV. HslU recognizes the N-terminal part of its protein substrates and unfolds these before they are guided to HslV for hydrolysis. In Shewanella sp. (strain ANA-3), this protein is ATP-dependent protease ATPase subunit HslU.